The sequence spans 417 residues: Peptidyl-Asp metalloendopeptidase (417 aa).

An N-terminal signal peptide occupies residues methionine 1–alanine 25. Histidine 327 is a binding site for Zn(2+). Glutamate 328 is a catalytic residue. Residues histidine 331 and histidine 337 each coordinate Zn(2+).

This sequence belongs to the peptidase M72 family. Zn(2+) is required as a cofactor.

The catalysed reaction is Cleavage of Xaa-|-Asp, Xaa-|-Glu and Xaa-|-cysteic acid bonds.. In terms of biological role, metalloprotease, specifically cleaves on the N-terminal side of aspartyl, glutamyl and cysteic acid residues. This is Peptidyl-Asp metalloendopeptidase from Stenotrophomonas maltophilia (strain R551-3).